The sequence spans 222 residues: Collectrin (222 aa).

An N-terminal signal peptide occupies residues 1-14 (MLWLLFFLVTAIHA). Residues 15 to 141 (ELCQPGAENA…LAPPMDPSVP (127 aa)) lie on the Extracellular side of the membrane. A Collectrin-like domain is found at 21–222 (AENAFKVRLS…MTEDERLTPL (202 aa)). Residues Asn76 and Asn93 are each glycosylated (N-linked (GlcNAc...) asparagine). The chain crosses the membrane as a helical span at residues 142–162 (IWIIIFGVIFCIIIVAIALLI). The Cytoplasmic portion of the chain corresponds to 163 to 222 (LSGIWQRRRKNKEPSEVDDAEDKCENMITIENGIPSDPLDMKGGHINDAFMTEDERLTPL). A phosphothreonine mark is found at Thr214 and Thr220.

This sequence belongs to the CLTRN family. Monomer. Homodimer; dimerization prevents CLTRN cleavage by BACE2. Interacts with SLC6A18; this interaction regulates the trafficking of SLC6A18 to the cell membrane and its amino acid transporter activity. Interacts with SLC6A19; this interaction regulates the trafficking of SLC6A19 to the cell membrane and its amino acid transporter activity. Interacts with SNAPIN. Glycosylated. Glycosylation is required for plasma membrane localization and for its cleavage by BACE2. In terms of processing, proteolytically processed in pancreatic beta cells by BACE2 leading to the generation and extracellular release of soluble CLTRN, and a corresponding cell-associated C-terminal fragment which is later cleaved by gamma-secretase. This shedding process inactivates CLTRN. Three cleavage sites have been identified for BACE2, two clustered sites after Phe-116 and Leu-118 and a more membrane proximal site at Phe-125; the preferred BACE2 cleavage site seems to be between Phe-125 and Leu-126, Phe-116 and Leu-118 act as alternative sites. Kidney; collecting ducts. Pancreas; beta cells of islets.

The protein resides in the cell membrane. Functionally, plays an important role in amino acid transport by acting as binding partner of amino acid transporters SLC6A18 and SLC6A19, regulating their trafficking on the cell surface and their amino acid transporter activity. May also play a role in trafficking of amino acid transporters SLC3A1 and SLC7A9 to the renal cortical cell membrane. Regulator of SNARE complex function. Stimulator of beta cell replication. The polypeptide is Collectrin (Homo sapiens (Human)).